The primary structure comprises 316 residues: Cytochrome c biogenesis protein CcsA (316 aa).

A run of 8 helical transmembrane segments spans residues 9–29 (IFVN…LINL), 39–61 (FSKN…RYLQ), 70–90 (LYES…ILEV), 94–114 (IGLS…FATL), 143–163 (LISY…LSLF), 224–244 (TISL…VWAN), 257–271 (ETWA…AIYL), and 289–309 (SMGF…GVGL).

It belongs to the CcmF/CycK/Ccl1/NrfE/CcsA family. May interact with Ccs1.

The protein resides in the plastid. The protein localises to the chloroplast thylakoid membrane. Functionally, required during biogenesis of c-type cytochromes (cytochrome c6 and cytochrome f) at the step of heme attachment. This chain is Cytochrome c biogenesis protein CcsA, found in Adiantum capillus-veneris (Maidenhair fern).